Here is a 452-residue protein sequence, read N- to C-terminus: Transcription factor PERIANTHIA (452 aa).

Positions 164 to 227 (DQRTLRRLAQ…RGVSADHTHL (64 aa)) constitute a bZIP domain. The segment at 166 to 186 (RTLRRLAQNREAARKSRLRKK) is basic motif. Positions 192–206 (LENSRIRLAQLEEEL) are leucine-zipper. The region spanning 233–449 (VFSFELEYTR…RALSSLWLAR (217 aa)) is the DOG1 domain.

Belongs to the bZIP family. In terms of assembly, interacts with GRXC7/ROXY1. Interacts with BOP1 and BOP2.

The protein localises to the nucleus. Its function is as follows. Transcriptional activator involved in the determination of floral organ number. Acts to determine floral organ patterning by establishing floral organ primordia in specific numbers and positions. Plays a role in regulating stem cell fate by directly controlling AG expression. Binds to the 5'-AAGAAT-3' cis-acting element found in AG promoter. Might represent a target for a post-translational modification by GRXC7/ROXY1. This Arabidopsis thaliana (Mouse-ear cress) protein is Transcription factor PERIANTHIA (PAN).